Here is a 466-residue protein sequence, read N- to C-terminus: Sushi repeat-containing protein SRPX2 (466 aa).

The signal sequence occupies residues 1 to 24; the sequence is MKTGSLTQRGALLLLLLLAPAVTP. 3 Sushi domains span residues 70–120, 121–179, and 263–322; these read ATCY…YCRQ, MRCH…VCVD, and RRCP…VCTP. Disulfide bonds link Cys-72/Cys-106, Cys-92/Cys-118, Cys-123/Cys-164, and Cys-150/Cys-177. Positions 178–262 constitute an HYR domain; sequence VDIDPPKIRC…SCKFIVKVQV (85 aa). Intrachain disulfides connect Cys-265–Cys-307 and Cys-293–Cys-320.

As to quaternary structure, forms homooligomers. Interacts with PLAUR (via the UPAR/Ly6 domains), ADAMTS4 and CTSB. Interacts with HGF; the interaction increases the mitogenic activity of HGF. Post-translationally, contains chondroitin sulfate chains.

Its subcellular location is the secreted. The protein localises to the cytoplasm. It is found in the cell surface. It localises to the synapse. Its function is as follows. Acts as a ligand for the urokinase plasminogen activator surface receptor. Plays a role in angiogenesis by inducing endothelial cell migration and the formation of vascular network (cords). Involved in cellular migration and adhesion. Increases the phosphorylation levels of FAK. Interacts with and increases the mitogenic activity of HGF. Promotes synapse formation. The polypeptide is Sushi repeat-containing protein SRPX2 (Rattus norvegicus (Rat)).